The sequence spans 254 residues: Hydroxyacylglutathione hydrolase (254 aa).

Zn(2+)-binding residues include His54, His56, Asp58, His59, His111, Asp130, and His168.

The protein belongs to the metallo-beta-lactamase superfamily. Glyoxalase II family. In terms of assembly, monomer. It depends on Zn(2+) as a cofactor.

It catalyses the reaction an S-(2-hydroxyacyl)glutathione + H2O = a 2-hydroxy carboxylate + glutathione + H(+). It participates in secondary metabolite metabolism; methylglyoxal degradation; (R)-lactate from methylglyoxal: step 2/2. Its function is as follows. Thiolesterase that catalyzes the hydrolysis of S-D-lactoyl-glutathione to form glutathione and D-lactic acid. The polypeptide is Hydroxyacylglutathione hydrolase (Legionella pneumophila (strain Lens)).